A 362-amino-acid chain; its full sequence is Dihydroorotate dehydrogenase (quinone) (362 aa).

FMN is bound by residues alanine 62–lysine 66 and threonine 86. Lysine 66 contributes to the substrate binding site. Asparagine 111–phenylalanine 115 lines the substrate pocket. FMN contacts are provided by asparagine 139 and asparagine 170. Asparagine 170 is a substrate binding site. The active-site Nucleophile is the serine 173. Asparagine 175 serves as a coordination point for substrate. The FMN site is built by lysine 215 and serine 243. Position 244–245 (asparagine 244–threonine 245) interacts with substrate. FMN contacts are provided by residues glycine 266, glycine 295, and tyrosine 316 to serine 317.

Belongs to the dihydroorotate dehydrogenase family. Type 2 subfamily. In terms of assembly, monomer. FMN is required as a cofactor.

The protein resides in the cell membrane. The catalysed reaction is (S)-dihydroorotate + a quinone = orotate + a quinol. The protein operates within pyrimidine metabolism; UMP biosynthesis via de novo pathway; orotate from (S)-dihydroorotate (quinone route): step 1/1. In terms of biological role, catalyzes the conversion of dihydroorotate to orotate with quinone as electron acceptor. The sequence is that of Dihydroorotate dehydrogenase (quinone) from Rhizobium johnstonii (strain DSM 114642 / LMG 32736 / 3841) (Rhizobium leguminosarum bv. viciae).